The chain runs to 2512 residues: Isonitrile lipopeptide synthase (2512 aa).

Carrier domains are found at residues 935 to 1003 (AAGL…PTPD) and 1984 to 2059 (APAG…GRDA). Residues serine 963 and serine 2019 each carry the O-(pantetheine 4'-phosphoryl)serine modification. Positions 2112–2372 (LTGATGFLGR…LPVTFVAEAI (261 aa)) constitute a Thioester reductase (TE) domain.

Belongs to the ATP-dependent AMP-binding enzyme family. Pantetheine 4'-phosphate is required as a cofactor.

The catalysed reaction is 2 a (3R)-3-isocyanyl-fatty acyl-[ACP] + L-lysine + ATP + 2 NADPH = an isonitrile lipopeptide + 2 holo-[ACP] + AMP + diphosphate + 2 NADP(+). Its function is as follows. Nonribosomal peptide synthetase (NRPS) involved in the biosynthesis of a unique class of isonitrile lipopeptides (INLPs) that seem to function as virulence factors in M.tuberculosis and to play a role in metal acquisition. Catalyzes the final step in the pathway, i.e. the condensation of a (3R)-3-isocyanyl-fatty acyl-[ACP] to both amino groups of a lysine, producing isonitrile lipopeptides. The chain is Isonitrile lipopeptide synthase from Mycobacterium tuberculosis (strain ATCC 25618 / H37Rv).